The sequence spans 404 residues: Probable tRNA sulfurtransferase (404 aa).

In terms of domain architecture, THUMP spans T60–T165. ATP-binding positions include M183–L184, H208–F209, R265, G287, and Q296.

Belongs to the ThiI family.

The protein localises to the cytoplasm. The catalysed reaction is [ThiI sulfur-carrier protein]-S-sulfanyl-L-cysteine + a uridine in tRNA + 2 reduced [2Fe-2S]-[ferredoxin] + ATP + H(+) = [ThiI sulfur-carrier protein]-L-cysteine + a 4-thiouridine in tRNA + 2 oxidized [2Fe-2S]-[ferredoxin] + AMP + diphosphate. It carries out the reaction [ThiS sulfur-carrier protein]-C-terminal Gly-Gly-AMP + S-sulfanyl-L-cysteinyl-[cysteine desulfurase] + AH2 = [ThiS sulfur-carrier protein]-C-terminal-Gly-aminoethanethioate + L-cysteinyl-[cysteine desulfurase] + A + AMP + 2 H(+). Its pathway is cofactor biosynthesis; thiamine diphosphate biosynthesis. In terms of biological role, catalyzes the ATP-dependent transfer of a sulfur to tRNA to produce 4-thiouridine in position 8 of tRNAs, which functions as a near-UV photosensor. Also catalyzes the transfer of sulfur to the sulfur carrier protein ThiS, forming ThiS-thiocarboxylate. This is a step in the synthesis of thiazole, in the thiamine biosynthesis pathway. The sulfur is donated as persulfide by IscS. The sequence is that of Probable tRNA sulfurtransferase from Streptococcus pneumoniae (strain ATCC 700669 / Spain 23F-1).